The chain runs to 410 residues: Cytosolic isocitrate dehydrogenase [NADP] (410 aa).

Residues 77–79 (TIT) and Arg84 contribute to the NADP(+) site. Thr79 contacts substrate. Residues 96 to 102 (SPNGTIR), Arg111, and Arg134 each bind substrate. Lys260 contacts NADP(+). Residues Asp275 and Asp279 each contribute to the Mn(2+) site. NADP(+)-binding positions include 310–315 (GTVTRH) and Asn328.

Belongs to the isocitrate and isopropylmalate dehydrogenases family. Mg(2+) is required as a cofactor. It depends on Mn(2+) as a cofactor.

The protein resides in the cytoplasm. The protein localises to the cytosol. The catalysed reaction is D-threo-isocitrate + NADP(+) = 2-oxoglutarate + CO2 + NADPH. Functionally, may supply 2-oxoglutarate for amino acid biosynthesis and ammonia assimilation via the glutamine synthetase/glutamate synthase (GS/GOGAT) pathway. May be involved in the production of NADPH to promote redox signaling or homeostasis in response to oxidative stress, or redox signaling linked to defense responses. The protein is Cytosolic isocitrate dehydrogenase [NADP] of Arabidopsis thaliana (Mouse-ear cress).